Here is a 489-residue protein sequence, read N- to C-terminus: 5-hydroxytryptamine receptor 3A (489 aa).

The N-terminal stretch at 1 to 23 (MRLCIPQVLLALFLSMLTAPGEG) is a signal peptide. At 24-246 (SRRRATQARD…MKFYVIIRRR (223 aa)) the chain is on the extracellular side. Residues asparagine 109, asparagine 175, and asparagine 191 are each glycosylated (N-linked (GlcNAc...) asparagine). Cysteine 162 and cysteine 176 are joined by a disulfide. The chain crosses the membrane as a helical span at residues 247-273 (PLFYAVSLLLPSIFLMVVDIVGFCLPP). Residues 274-278 (DSGER) lie on the Cytoplasmic side of the membrane. The helical transmembrane segment at 279-297 (VSFKITLLLGYSVFLIIVS) threads the bilayer. At 298 to 307 (DTLPATAIGT) the chain is on the extracellular side. Residues 308 to 326 (PLIGVYFVVCMALLVISLA) form a helical membrane-spanning segment. Residues 327-466 (ETIFIVRLVH…GYVLDRLLFR (140 aa)) are Cytoplasmic-facing. An HA-stretch; determines single-channel conductance in 5-HT3 receptors region spans residues 425-461 (AVRGLLQELSSIRHFLEKRDEMREVARDWLRVGYVLD). The helical transmembrane segment at 467–486 (IYLLAVLAYSITLVTLWSIW) threads the bilayer. At 487-489 (HYS) the chain is on the extracellular side.

Belongs to the ligand-gated ion channel (TC 1.A.9) family. 5-hydroxytryptamine receptor (TC 1.A.9.2) subfamily. HTR3A sub-subfamily. Forms homopentameric as well as heteropentameric serotonin-activated cation-selective channel complexes with HTR3B or HTR3C or HTR3D or HTR3E. The homomeric complex is functional but exhibits low conductance with modified voltage dependence, and decreased agonist and antagonist affinity. Heteropentameric complexes display properties which resemble that of neuronal serotonin-activated channels in vivo. Interacts with RIC3. In terms of tissue distribution, brain, spinal cord, and heart.

Its subcellular location is the postsynaptic cell membrane. The protein resides in the cell membrane. It carries out the reaction Na(+)(in) = Na(+)(out). The enzyme catalyses K(+)(in) = K(+)(out). It catalyses the reaction Ca(2+)(in) = Ca(2+)(out). The catalysed reaction is Mg(2+)(in) = Mg(2+)(out). Functionally, forms serotonin (5-hydroxytryptamine/5-HT3)-activated cation-selective channel complexes, which when activated cause fast, depolarizing responses in neurons. The polypeptide is 5-hydroxytryptamine receptor 3A (Mus musculus (Mouse)).